The following is a 167-amino-acid chain: Leptin (167 aa).

Residues 1 to 21 form the signal peptide; that stretch reads MRCGPLCRFLWLWPYLSCVEA. The cysteines at positions 117 and 167 are disulfide-linked.

This sequence belongs to the leptin family.

The protein resides in the secreted. In terms of biological role, key player in the regulation of energy balance and body weight control. Once released into the circulation, has central and peripheral effects by binding LEPR, found in many tissues, which results in the activation of several major signaling pathways. In the hypothalamus, acts as an appetite-regulating factor that induces a decrease in food intake and an increase in energy consumption by inducing anorexinogenic factors and suppressing orexigenic neuropeptides, also regulates bone mass and secretion of hypothalamo-pituitary-adrenal hormones. In the periphery, increases basal metabolism, influences reproductive function, regulates pancreatic beta-cell function and insulin secretion, is pro-angiogenic for endothelial cell and affects innate and adaptive immunity. In the arcuate nucleus of the hypothalamus, activates by depolarization POMC neurons inducing FOS and SOCS3 expression to release anorexigenic peptides and inhibits by hyperpolarization NPY neurons inducing SOCS3 with a consequent reduction on release of orexigenic peptides. In addition to its known satiety inducing effect, has a modulatory role in nutrient absorption. In the intestine, reduces glucose absorption by enterocytes by activating PKC and leading to a sequential activation of p38, PI3K and ERK signaling pathways which exerts an inhibitory effect on glucose absorption. Acts as a growth factor on certain tissues, through the activation of different signaling pathways increases expression of genes involved in cell cycle regulation such as CCND1, via JAK2-STAT3 pathway, or VEGFA, via MAPK1/3 and PI3K-AKT1 pathways. May also play an apoptotic role via JAK2-STAT3 pathway and up-regulation of BIRC5 expression. Pro-angiogenic, has mitogenic activity on vascular endothelial cells and plays a role in matrix remodeling by regulating the expression of matrix metalloproteinases (MMPs) and tissue inhibitors of metalloproteinases (TIMPs). In innate immunity, modulates the activity and function of neutrophils by increasing chemotaxis and the secretion of oxygen radicals. Increases phagocytosis by macrophages and enhances secretion of pro-inflammatory mediators. Increases cytotoxic ability of NK cells. Plays a pro-inflammatory role, in synergy with IL1B, by inducing NOS2 which promotes the production of IL6, IL8 and Prostaglandin E2, through a signaling pathway that involves JAK2, PI3K, MAP2K1/MEK1 and MAPK14/p38. In adaptive immunity, promotes the switch of memory T-cells towards T helper-1 cell immune responses. Increases CD4(+)CD25(-) T-cell proliferation and reduces autophagy during TCR (T-cell receptor) stimulation, through MTOR signaling pathway activation and BCL2 up-regulation. This Canis lupus familiaris (Dog) protein is Leptin (LEP).